Consider the following 1297-residue polypeptide: MELYFGEYQHVQQEYGVHLRLASGDTPKPRNSQPSKAGSYGVSIRVQGIDGHPYIVLNNTERCLAGTPFPENAPSFPSSVINNLSLHPSNGTVLKENTPEELQLPENPYLQTSPLRGQKQFSLHEGRNGVLERKDGPTKLPHVLNFQRHPELLQPYDPEKNEVNAKKHHPPESPWLRNATEDGTNCKKSRNCFPKSYGSQPNSPTSEDLAKTNMTAIRLCSSVVIEDPQKQTSVCVNVQRCAKEGVGEETLSPRRKSPTAPSPQAYSETKKNRPDVLPFRRQDSAGPILDGARSRRSSSSSTTPTSATSLYKFLLDDQECAIHADSVNRHENRRYIPFLPGTGRDIDTCSIPGVDQLIEKFDQKPGLQRRGRSGKRNRINPDDRKRSRSVDSAFPFGLQGNTEYLTEFSRNLGKSSEHLLRPSQVFPQRSVAQEHRGKHSPSSPPAKLQGAQGAHPKPPLQNKDGKVLNKGRQESTGACAPSLPAPNKKEEEIKIATATLMLQNRAVAATSDSGAKKISVKTFPSDSSTQATPDLLKGQQELTQQTNEETAKQILYNYLKEGGTDNEDATKRKVNLVFEKIQTLKSRAAGSAQGSNQAPNSPSEGNSLLDQKNKLILEVSELQQQLQLEMKNQQNIKEERERMREDLEELRVRHQSQVEETATLQRRLEESEGELRKSLEELFQVKMEREQHQTEIRDLQDQLSEMHDELDSTKRSEDREKGALIEELLQAKQDLQDLLIAKEEQEDLLRKRERELTALKGALKEEVSSHDQEMDKLKEQYDAELQALRESVEEATKNVEVLASRSNSSEQSQAEADLREKVLKEENEKLQGRIAELERRAAQLQRQMEDVKGDEAQAKETLRKCESEVQQLEEALVHARKEEKEATCARRALEKELEQARRELSQVSQEQKELLEKLRDEAEQKEQLRKLKNEMESERWHLDKTIEKLQKEMADIAEASRTSSLELQKQLGEYKEKNRRELAEMQTQLKEKCLEVEKARLAASKMQDELRLKEEELQDYQRAEEEALTKRQLLEQSLKDLEYELEAKSHLKDDRSRLIKQMEDKVSQLEIELEEERTNADLLSERITWSREQMEQMRSELLQEKAAKQDLECDKISLERQNKDLKSRIIHLEGSYRSSKEGLVVQMEARIAELEDRLENEERDRANLQLSNRRLERKVKELVMQVDDEHLSLTDQKDQLSLRLKAMKRQVEEAEEEIDRLESSKKKLQRELEEQMGVNEQLQGQLNSLKKGLRLKTLSSKVLDDSDDDDLSSDAGSLYEAPLSYAFPKDSTIASQI.

Residues 1–550 (MELYFGEYQH…ELTQQTNEET (550 aa)) are head. Residues 37 to 51 (AGSYGVSIRVQGIDG) carry the ZIM motif. 3 positions are modified to phosphoserine: Ser-113, Ser-203, and Ser-257. Disordered regions lie at residues 161–208 (NEVN…TSED), 245–306 (GVGE…TPTS), 364–396 (KPGL…AFPF), and 428–467 (QRSV…DGKV). Residues 197 to 206 (YGSQPNSPTS) are compositionally biased toward polar residues. Over residues 268 to 283 (ETKKNRPDVLPFRRQD) the composition is skewed to basic and acidic residues. Phosphoserine is present on residues Ser-284, Ser-298, and Ser-299. The span at 297–306 (SSSSSTTPTS) shows a compositional bias: low complexity. Over residues 367–378 (LQRRGRSGKRNR) the composition is skewed to basic residues. Over residues 379 to 389 (INPDDRKRSRS) the composition is skewed to basic and acidic residues. Phosphoserine is present on residues Ser-389 and Ser-392. Ser-482 carries the post-translational modification Phosphoserine. The interval 586–608 (SRAAGSAQGSNQAPNSPSEGNSL) is disordered. Over residues 592-608 (AQGSNQAPNSPSEGNSL) the composition is skewed to polar residues. Residues 604-1251 (EGNSLLDQKN…LQGQLNSLKK (648 aa)) adopt a coiled-coil conformation. Phosphoserine is present on residues Ser-678 and Ser-704. The tail stretch occupies residues 1259–1297 (SSKVLDDSDDDDLSSDAGSLYEAPLSYAFPKDSTIASQI).

It belongs to the cingulin family. Homodimer or oligomer. Interacts with CD2AP and SH3BP1; probably part of a complex at cell junctions. In terms of tissue distribution, widely expressed. Highly expressed in the kidney and lung.

It is found in the cell junction. Its subcellular location is the tight junction. In terms of biological role, may be involved in anchoring the apical junctional complex, especially tight junctions, to actin-based cytoskeletons. The protein is Cingulin-like protein 1 of Mus musculus (Mouse).